Here is a 339-residue protein sequence, read N- to C-terminus: Serine/arginine-rich splicing factor 6 (339 aa).

The 71-residue stretch at 2 to 72 (PRVYIGRLSY…ERVIVEHARG (71 aa)) folds into the RRM 1 domain. A phosphoserine mark is found at Ser45, Ser81, and Ser84. Positions 75-103 (RDRDGYSYGSRSGGGGYSSRRTSGRDKYG) are disordered. Residues 110 to 183 (YRLIVENLSS…RNIRLIEDKP (74 aa)) enclose the RRM 2 domain. Lys165 carries the N6-acetyllysine modification. The tract at residues 176 to 339 (IRLIEDKPRT…RSRSRSSSRD (164 aa)) is disordered. Lys182 participates in a covalent cross-link: Glycyl lysine isopeptide (Lys-Gly) (interchain with G-Cter in SUMO2). Residues 185–250 (TSHRRSYSGS…RKSRSKSKSK (66 aa)) show a composition bias toward basic residues. Residues 280-291 (SPKENGKGDIKS) show a composition bias toward basic and acidic residues. Phosphoserine is present on residues Ser297 and Ser299. Residue Ser303 is modified to Phosphoserine; by DYRK1A. 2 positions are modified to phosphoserine: Ser314 and Ser316. The segment covering 321-339 (RASRSRSRSRSRSRSSSRD) has biased composition (basic residues).

Belongs to the splicing factor SR family. As to quaternary structure, binds SREK1/SFRS12. Interacts with DYRK1A. Interacts with RBMY; the interaction inhibits SRSF6 pre-mRNA splicing. In terms of processing, extensively phosphorylated on serine residues in the RS domain. Phosphorylated by DYRK1A, probably in the RS domain. Phosphorylation by DYRK1A modulates alternative splice site selection and inhibits the expression of MAPT/Tau exon 10.

Its subcellular location is the nucleus. It is found in the nucleus speckle. Functionally, plays a role in constitutive splicing and modulates the selection of alternative splice sites. Plays a role in the alternative splicing of MAPT/Tau exon 10. Binds to alternative exons of TNC pre-mRNA and promotes the expression of alternatively spliced TNC. Plays a role in wound healing and in the regulation of keratinocyte differentiation and proliferation via its role in alternative splicing. This chain is Serine/arginine-rich splicing factor 6 (Srsf6), found in Mus musculus (Mouse).